A 203-amino-acid chain; its full sequence is Transcriptional regulator GfcR 2 (203 aa).

This sequence belongs to the purine/pyrimidine phosphoribosyltransferase family. GfcR subfamily.

This chain is Transcriptional regulator GfcR 2, found in Methanosarcina acetivorans (strain ATCC 35395 / DSM 2834 / JCM 12185 / C2A).